A 338-amino-acid polypeptide reads, in one-letter code: Lipoate-protein ligase A (338 aa).

Positions 29–216 (PATQRVLFLW…AFFAHYGERV (188 aa)) constitute a BPL/LPL catalytic domain. ATP contacts are provided by residues arginine 71, 76–79 (GAVF), and lysine 134. Residue lysine 134 participates in (R)-lipoate binding.

This sequence belongs to the LplA family. As to quaternary structure, monomer.

The protein resides in the cytoplasm. It catalyses the reaction L-lysyl-[lipoyl-carrier protein] + (R)-lipoate + ATP = N(6)-[(R)-lipoyl]-L-lysyl-[lipoyl-carrier protein] + AMP + diphosphate + H(+). It participates in protein modification; protein lipoylation via exogenous pathway; protein N(6)-(lipoyl)lysine from lipoate: step 1/2. It functions in the pathway protein modification; protein lipoylation via exogenous pathway; protein N(6)-(lipoyl)lysine from lipoate: step 2/2. In terms of biological role, catalyzes both the ATP-dependent activation of exogenously supplied lipoate to lipoyl-AMP and the transfer of the activated lipoyl onto the lipoyl domains of lipoate-dependent enzymes. The sequence is that of Lipoate-protein ligase A from Escherichia coli O6:K15:H31 (strain 536 / UPEC).